The sequence spans 210 residues: Chorismate pyruvate-lyase (210 aa).

The protein belongs to the chorismate pyruvate-lyase type 2 family.

The catalysed reaction is chorismate = 4-hydroxybenzoate + pyruvate. Its function is as follows. Removes the pyruvyl group from chorismate to provide 4-hydroxybenzoate (4HB). Involved in the synthesis of glycosylated p-hydroxybenzoic acid methyl esters (p-HBADs) and phenolic glycolipids (PGL) that play important roles in the pathogenesis of mycobacterial infections. This is Chorismate pyruvate-lyase from Mycobacterium leprae (strain TN).